Consider the following 352-residue polypeptide: tRNA pseudouridine synthase D (352 aa).

Residue Asp-81 is the Nucleophile of the active site. The TRUD domain occupies 158–306; sequence GVPNYFGQQR…RHERRTLLLK (149 aa).

The protein belongs to the pseudouridine synthase TruD family.

The catalysed reaction is uridine(13) in tRNA = pseudouridine(13) in tRNA. Functionally, responsible for synthesis of pseudouridine from uracil-13 in transfer RNAs. In Photobacterium profundum (strain SS9), this protein is tRNA pseudouridine synthase D.